The chain runs to 523 residues: Lysine-specific demethylase 4D (523 aa).

Positions 18-60 constitute a JmjN domain; the sequence is IMIFHPTKEEFNDFDKYIAYMESQGAHRAGLAKIIPPKEWKAR. A polyADP-ribosyl glutamic acid mark is found at E26 and E27. A 2-oxoglutarate-binding site is contributed by Y136. The 167-residue stretch at 146–312 folds into the JmjC domain; it reads DENTKQWNLG…YGKMASQCSC (167 aa). H192 and E194 together coordinate Fe cation. N202 and K210 together coordinate 2-oxoglutarate. Zn(2+) contacts are provided by C238 and H244. K245 contacts 2-oxoglutarate. H280 contacts Fe cation. C310 and C312 together coordinate Zn(2+). The tract at residues 407–523 is disordered; the sequence is RRSAVSGTAT…ASGCSWAPVP (117 aa). The span at 428–440 shows a compositional bias: low complexity; the sequence is KPSSTPSSTPGPS. Over residues 448 to 458 the composition is skewed to basic residues; sequence NGRRGRGRPPQ.

The protein belongs to the JHDM3 histone demethylase family. Requires Fe(2+) as cofactor. Post-translationally, ubiquitinated via 'Lys-63'-linked ubiquitin chains. Deubiquitinated by USP14 with the help of TRIM14 leading to stabilization.

The protein resides in the nucleus. It catalyses the reaction N(6),N(6),N(6)-trimethyl-L-lysyl(9)-[histone H3] + 2 2-oxoglutarate + 2 O2 = N(6)-methyl-L-lysyl(9)-[histone H3] + 2 formaldehyde + 2 succinate + 2 CO2. Functionally, histone demethylase that specifically demethylates 'Lys-9' of histone H3, thereby playing a central role in histone code. Does not demethylate histone H3 'Lys-4', H3 'Lys-27', H3 'Lys-36' nor H4 'Lys-20'. Demethylates both di- and trimethylated H3 'Lys-9' residue, while it has no activity on monomethylated residues. Demethylation of Lys residue generates formaldehyde and succinate. In Homo sapiens (Human), this protein is Lysine-specific demethylase 4D (KDM4D).